The chain runs to 286 residues: Elongation factor Ts (286 aa).

The involved in Mg(2+) ion dislocation from EF-Tu stretch occupies residues 82 to 85 (TDFV).

It belongs to the EF-Ts family.

It localises to the cytoplasm. Its function is as follows. Associates with the EF-Tu.GDP complex and induces the exchange of GDP to GTP. It remains bound to the aminoacyl-tRNA.EF-Tu.GTP complex up to the GTP hydrolysis stage on the ribosome. This is Elongation factor Ts from Hahella chejuensis (strain KCTC 2396).